Reading from the N-terminus, the 132-residue chain is Small ribosomal subunit protein uS8 (132 aa).

Belongs to the universal ribosomal protein uS8 family. Part of the 30S ribosomal subunit. Contacts proteins S5 and S12.

Its function is as follows. One of the primary rRNA binding proteins, it binds directly to 16S rRNA central domain where it helps coordinate assembly of the platform of the 30S subunit. The protein is Small ribosomal subunit protein uS8 of Ehrlichia ruminantium (strain Welgevonden).